Here is a 63-residue protein sequence, read N- to C-terminus: Kappa-theraphotoxin-Cg3a 1 (63 aa).

The signal sequence occupies residues 1-21 (MKNTSILFILGLALLLVLAFE). Positions 22-29 (VQVGESDG) are excised as a propeptide. 3 cysteine pairs are disulfide-bonded: cysteine 31-cysteine 46, cysteine 38-cysteine 51, and cysteine 45-cysteine 58.

Belongs to the neurotoxin 10 (Hwtx-1) family. 44 (Jztx-4) subfamily. As to expression, expressed by the venom gland.

Its subcellular location is the secreted. Gating modifier of Kv2.1/KCNB1, Kv2.2/KCNB2 and Kv4.3/KCND3 channels. This chain is Kappa-theraphotoxin-Cg3a 1, found in Chilobrachys guangxiensis (Chinese earth tiger tarantula).